The primary structure comprises 198 residues: Dephospho-CoA kinase (198 aa).

The 196-residue stretch at 3–198 (IVGITGGIGS…LLAKERLELA (196 aa)) folds into the DPCK domain. Residue 11 to 16 (GSGKTT) participates in ATP binding.

This sequence belongs to the CoaE family.

Its subcellular location is the cytoplasm. It carries out the reaction 3'-dephospho-CoA + ATP = ADP + CoA + H(+). It participates in cofactor biosynthesis; coenzyme A biosynthesis; CoA from (R)-pantothenate: step 5/5. Its function is as follows. Catalyzes the phosphorylation of the 3'-hydroxyl group of dephosphocoenzyme A to form coenzyme A. In Dehalococcoides mccartyi (strain ATCC BAA-2266 / KCTC 15142 / 195) (Dehalococcoides ethenogenes (strain 195)), this protein is Dephospho-CoA kinase.